Consider the following 244-residue polypeptide: ATP synthase subunit b 2 (244 aa).

A helical transmembrane segment spans residues 2 to 22 (TVDWWTIGLQVINVSVLIWLL).

It belongs to the ATPase B chain family. F-type ATPases have 2 components, F(1) - the catalytic core - and F(0) - the membrane proton channel. F(1) has five subunits: alpha(3), beta(3), gamma(1), delta(1), epsilon(1). F(0) has three main subunits: a(1), b(2) and c(10-14). The alpha and beta chains form an alternating ring which encloses part of the gamma chain. F(1) is attached to F(0) by a central stalk formed by the gamma and epsilon chains, while a peripheral stalk is formed by the delta and b chains.

Its subcellular location is the cell inner membrane. Its function is as follows. F(1)F(0) ATP synthase produces ATP from ADP in the presence of a proton or sodium gradient. F-type ATPases consist of two structural domains, F(1) containing the extramembraneous catalytic core and F(0) containing the membrane proton channel, linked together by a central stalk and a peripheral stalk. During catalysis, ATP synthesis in the catalytic domain of F(1) is coupled via a rotary mechanism of the central stalk subunits to proton translocation. In terms of biological role, component of the F(0) channel, it forms part of the peripheral stalk, linking F(1) to F(0). This Gluconobacter oxydans (strain 621H) (Gluconobacter suboxydans) protein is ATP synthase subunit b 2.